Here is a 1501-residue protein sequence, read N- to C-terminus: Opaque-specific ABC transporter CDR3 (1501 aa).

Residues 1–502 (MAKTSQAEGQ…KRYWDRMRGD (502 aa)) are Cytoplasmic-facing. The tract at residues 58–87 (TYTTATMHPNGINPISDKTDPTLDPESPSF) is disordered. One can recognise an ABC transporter 1 domain in the interval 140–395 (KYARNIFNKF…FKKMGFVCQD (256 aa)). A helical transmembrane segment spans residues 503–523 (IIVPLSTVAGNIAMALILSSV). Asparagine 530 carries an N-linked (GlcNAc...) asparagine glycan. The next 5 membrane-spanning stretches (helical) occupy residues 540–560 (VMYY…YNMY), 589–609 (FPLK…MVNF), 614–634 (GAFF…SHLF), 653–673 (LLLF…YMLG), and 755–775 (FGVL…FVQT). The Cytoplasmic portion of the chain corresponds to 776-1175 (NKSSISKGET…LFQQYWRTPS (400 aa)). The region spanning 840–1083 (FHWRNLTYTV…LIEYFERNGA (244 aa)) is the ABC transporter 2 domain. An ATP-binding site is contributed by 876–883 (GASGAGKT). The next 7 membrane-spanning stretches (helical) occupy residues 1176 to 1196 (YIYS…FTYY), 1212 to 1232 (IFSM…LFVT), 1261 to 1281 (IPYQ…PVGL), 1297 to 1317 (LMWL…QFCI), 1325 to 1345 (YAAN…GVIA), 1353 to 1375 (FWVF…SIGL), and 1451 to 1471 (GIFI…YWLF).

The protein belongs to the ABC transporter superfamily. ABCG family. PDR (TC 3.A.1.205) subfamily.

It localises to the membrane. In Candida albicans (Yeast), this protein is Opaque-specific ABC transporter CDR3 (CDR3).